Here is a 137-residue protein sequence, read N- to C-terminus: 1,4-dihydroxy-2-naphthoyl-CoA hydrolase (137 aa).

Residue D12 is part of the active site.

Belongs to the 4-hydroxybenzoyl-CoA thioesterase family. DHNA-CoA hydrolase subfamily.

The enzyme catalyses 1,4-dihydroxy-2-naphthoyl-CoA + H2O = 1,4-dihydroxy-2-naphthoate + CoA + H(+). It functions in the pathway cofactor biosynthesis; phylloquinone biosynthesis. Its pathway is quinol/quinone metabolism; 1,4-dihydroxy-2-naphthoate biosynthesis; 1,4-dihydroxy-2-naphthoate from chorismate: step 7/7. Its function is as follows. Catalyzes the hydrolysis of 1,4-dihydroxy-2-naphthoyl-CoA (DHNA-CoA) to 1,4-dihydroxy-2-naphthoate (DHNA), a reaction involved in phylloquinone (vitamin K1) biosynthesis. The polypeptide is 1,4-dihydroxy-2-naphthoyl-CoA hydrolase (Acaryochloris marina (strain MBIC 11017)).